The chain runs to 494 residues: Hexokinase-2 (494 aa).

Positions 32–483 constitute a Hexokinase domain; the sequence is GRADAVLREL…SGIGAALLAA (452 aa). A hexokinase small subdomain region spans residues 87 to 225; it reads SGEEKGVFYA…GLDMKVTALI (139 aa). Residues Gly-101, Thr-102, and Asn-103 each contribute to the ADP site. D-glucose contacts are provided by Thr-191, Lys-192, Asn-226, and Asp-227. Residues 226–472 form a hexokinase large subdomain region; that stretch reads NDTIGTLAGG…STIVIKLAKD (247 aa). Thr-250 is a binding site for ADP. D-glucose contacts are provided by Asn-253, Glu-281, and Glu-312. Gly-437 serves as a coordination point for ADP.

It belongs to the hexokinase family. Expressed in roots, leaves, flowers, immature seeds, endosperm and seed coat.

It carries out the reaction a D-hexose + ATP = a D-hexose 6-phosphate + ADP + H(+). The enzyme catalyses D-fructose + ATP = D-fructose 6-phosphate + ADP + H(+). It catalyses the reaction D-glucose + ATP = D-glucose 6-phosphate + ADP + H(+). It functions in the pathway carbohydrate metabolism; hexose metabolism. Its pathway is carbohydrate degradation; glycolysis; D-glyceraldehyde 3-phosphate and glycerone phosphate from D-glucose: step 1/4. Fructose and glucose phosphorylating enzyme. The polypeptide is Hexokinase-2 (HXK2) (Oryza sativa subsp. japonica (Rice)).